The sequence spans 463 residues: Oxidoreductase OXR1 (463 aa).

6-hydroxy-FAD is bound by residues G59–S63, V154, and D366.

This sequence belongs to the FAD-dependent oxidoreductase family. Requires 6-hydroxy-FAD as cofactor.

Its pathway is siderophore biosynthesis. Functionally, oxidoreductase; part of the gene cluster that mediates the biosynthesis of hydroxamate-containing siderophores that play a critical role in virulence via intracellular iron acquisition during macrophage infection. The chain is Oxidoreductase OXR1 from Ajellomyces capsulatus (Darling's disease fungus).